The sequence spans 309 residues: 5-formyl-3-hydroxy-2-methylpyridine 4-carboxylate 5-dehydrogenase (309 aa).

Residues threonine 12–methionine 13, aspartate 32, valine 87–glutamate 89, and lysine 94 each bind NAD(+).

The protein belongs to the 3-hydroxyacyl-CoA dehydrogenase family. As to quaternary structure, homodimer.

It catalyses the reaction 5-formyl-3-hydroxy-2-methylpyridine-4-carboxylate + NAD(+) + H2O = 5-hydroxy-6-methylpyridine-3,4-dicarboxylate + NADH + 2 H(+). The enzyme catalyses 5-formyl-3-hydroxy-2-methylpyridine-4-carboxylate + NADH + H(+) = 4-pyridoxate + NAD(+). It functions in the pathway cofactor degradation; B6 vitamer degradation. Its function is as follows. Involved in the degradation of pyridoxine (vitamin B(6)). Catalyzes the oxidation of 5-formyl-3-hydroxy-2-methylpyridine-4-carboxylate (FHMPC) by NAD(+) to 5-hydroxy-6-methylpyridine-3,4-dicarboxylate (HMPDC). Can also catalyze the reduction of FHMPC by NADH to 4-pyridoxic acid. The protein is 5-formyl-3-hydroxy-2-methylpyridine 4-carboxylate 5-dehydrogenase of Mesorhizobium japonicum (strain LMG 29417 / CECT 9101 / MAFF 303099) (Mesorhizobium loti (strain MAFF 303099)).